The chain runs to 102 residues: Omega-hexatoxin-Hi2a (102 aa).

The first 23 residues, 1 to 23, serve as a signal peptide directing secretion; the sequence is MKFSKLSLTLALILTQALLVVCG. Positions 24-56 are excised as a propeptide; sequence KINEDFMENGLESHALHDEIRKPIDTEKADAER. 3 disulfides stabilise this stretch: Cys61–Cys75, Cys68–Cys81, and Cys74–Cys86. A Leucine amide modification is found at Leu98. The propeptide occupies 100 to 102; it reads RAL.

The protein belongs to the neurotoxin 15 family. 02 (omega-actx) subfamily. As to expression, expressed by the venom gland.

Its subcellular location is the secreted. Its function is as follows. Potent inhibitor of insect, but not mammalian, voltage-gated calcium channels (Cav). The chain is Omega-hexatoxin-Hi2a from Hadronyche infensa (Fraser island funnel-web spider).